The primary structure comprises 233 residues: Orotidine 5'-phosphate decarboxylase (233 aa).

Substrate is bound by residues Asp13, Lys35, 62-71 (DLKFHDIPNT), Thr122, Arg182, Gln191, Gly211, and Arg212. Lys64 acts as the Proton donor in catalysis.

The protein belongs to the OMP decarboxylase family. Type 1 subfamily. In terms of assembly, homodimer.

The catalysed reaction is orotidine 5'-phosphate + H(+) = UMP + CO2. It participates in pyrimidine metabolism; UMP biosynthesis via de novo pathway; UMP from orotate: step 2/2. Catalyzes the decarboxylation of orotidine 5'-monophosphate (OMP) to uridine 5'-monophosphate (UMP). This Pseudomonas putida (strain ATCC 47054 / DSM 6125 / CFBP 8728 / NCIMB 11950 / KT2440) protein is Orotidine 5'-phosphate decarboxylase.